A 1343-amino-acid polypeptide reads, in one-letter code: MENLPFPLKLLSASSLNAPSSTPWVLDIFLTLVFALGFFFLLLPYLSYFHCDDPPSPSPGKRKCPVGRRRRPRGRMKNHSLRAGRECPRGLEETSDLLSQLQSLLGPHLDKGDFGQLSGPDPPGEVGERAPDGASQSSHEPMEDAAPILSPLASPDPQAKHPQDLASTPSPGPMTTSVSSLSASQPPEPSLPLEHPSPEPPALFPHPPHTPDPLACSPPPPKGFTAPPLRDSTLITPSHCDSVALPLGTVPQSLSPHEDLVASVPAISGLGGSNSHVSASSRWQETARTSCAFNSSVQQDPLSRHPPETCQMEAGSLFLLSSDGQNVVGIQVTETAKVNIWEEKENVGSFTNQMTPEKHLNSLGNLAKSLDAEQDTTNPKPFWNMGENSKQLPGPQKCSDPRLLQESFWKNYSQLFWGLPSLHSESLVANAWVTDRSYTLQSPPFLFNEMSNVCPIQRETTMSPLLFQAQPLSHRQPFISSTPQFLPTPMAQAEAQAHLQSSFPVLSPAFPSLIKNTGVACPASQNKVQALSLPETQHPEWPLLRKQLEGRLALPSRVQKSQDVFSVSTPNLPQESLTSILPENFPVSPELRRQLEQHIKKWIIQHWGNLGRIQESLDLMQLRDESPGTSQAKGKPSPWQSSTSTGESSKEAQKVKFQLERDLCPHLGQILGETPQNLSRDMKSFPRKVLGVTSEESERNLRKPLRSDSGSDLLRCTERTHIENILKAHMGRNLGQTNEGLIPVRVRRSWLAVNQALPVSNTHVKTSNLAAPKSGKACVNTAQVLSFLEPCTQQGLGAHIVRFWAKHRWGLPLRVLKPIQCFKLEKVSSLSLTQLAGPSSATCESGAGSEVEVDMFLRKPPMASLRKQVLTKASDHMPESLLASSPAWKQFQRAPRGIPSWNDHGPLKPPPAGQEGRWPSKPLTYSLTGSTQQSRSLGAQSSKAGETREAVPQCRVPLETCMLANLQATSEDVHGFEAPGTSKSSLHPRVSVSQDPRKLCLMEEVVSEFEPGMATKSETQPQVCAAVVLLPDGQASVVPHASENLVSQVPQGHLQSMPTGNMRASQELHDLMAARRSKLVQEEPRNPNCQGSCKSQRPMFPPIHKSEKSRKPNLEKHEERLEGLRTPQLTPVRKTEDTHQDEGVQLLPSKKQPPSVSHFGENIKQFFQWIFSKKKSKPAPVTAESQKTVKNRSCVYSSSAEAQGLMTAVGQMLDKKMSLCHAHHASKVNQHKQKFQAPVCGFPCNHRHLFYSEHGRILSYAASSQQATLKSQGCPNRDRQIRNQQPLKSVRCNNEQWGLRHPQILHPKKAVSPVSPPQHWPKTSGASSHHHHCPRHCLLWEGI.

Residues 23–43 (PWVLDIFLTLVFALGFFFLLL) traverse the membrane as a helical segment. Disordered regions lie at residues 55 to 88 (PSPS…RECP), 106 to 235 (GPHL…STLI), 624 to 654 (DESP…EAQK), 895 to 951 (PRGI…REAV), 1080 to 1156 (VQEE…PPSV), and 1309 to 1331 (KAVS…SHHH). Residues 60–82 (GKRKCPVGRRRRPRGRMKNHSLR) show a composition bias toward basic residues. Residues 165–178 (LASTPSPGPMTTSV) are compositionally biased toward polar residues. Residues 198–222 (PEPPALFPHPPHTPDPLACSPPPPK) are compositionally biased toward pro residues. Polar residues-rich tracts occupy residues 627 to 647 (PGTS…STGE) and 923 to 944 (LTYS…SSKA). Composition is skewed to basic and acidic residues over residues 1104 to 1123 (HKSE…RLEG) and 1133 to 1142 (RKTEDTHQDE).

This sequence belongs to the SPATA31 family.

The protein resides in the membrane. Functionally, may play a role in spermatogenesis. This is Spermatogenesis-associated protein 31A6 (SPATA31A6) from Homo sapiens (Human).